Here is a 383-residue protein sequence, read N- to C-terminus: UDP-N-acetylglucosamine--N-acetylmuramyl-(pentapeptide) pyrophosphoryl-undecaprenol N-acetylglucosamine transferase (383 aa).

UDP-N-acetyl-alpha-D-glucosamine is bound by residues 11-13, Asn125, Arg166, Ser191, Ile246, and Gln291; that span reads TGG. The disordered stretch occupies residues 364-383; that stretch reads PNGRERTPIEAEKKAPRSNS. Basic and acidic residues predominate over residues 366–383; it reads GRERTPIEAEKKAPRSNS.

Belongs to the glycosyltransferase 28 family. MurG subfamily.

It localises to the cell inner membrane. The enzyme catalyses di-trans,octa-cis-undecaprenyl diphospho-N-acetyl-alpha-D-muramoyl-L-alanyl-D-glutamyl-meso-2,6-diaminopimeloyl-D-alanyl-D-alanine + UDP-N-acetyl-alpha-D-glucosamine = di-trans,octa-cis-undecaprenyl diphospho-[N-acetyl-alpha-D-glucosaminyl-(1-&gt;4)]-N-acetyl-alpha-D-muramoyl-L-alanyl-D-glutamyl-meso-2,6-diaminopimeloyl-D-alanyl-D-alanine + UDP + H(+). It functions in the pathway cell wall biogenesis; peptidoglycan biosynthesis. Its function is as follows. Cell wall formation. Catalyzes the transfer of a GlcNAc subunit on undecaprenyl-pyrophosphoryl-MurNAc-pentapeptide (lipid intermediate I) to form undecaprenyl-pyrophosphoryl-MurNAc-(pentapeptide)GlcNAc (lipid intermediate II). This chain is UDP-N-acetylglucosamine--N-acetylmuramyl-(pentapeptide) pyrophosphoryl-undecaprenol N-acetylglucosamine transferase, found in Myxococcus xanthus (strain DK1622).